A 459-amino-acid chain; its full sequence is Exodeoxyribonuclease 7 large subunit (459 aa).

It belongs to the XseA family. As to quaternary structure, heterooligomer composed of large and small subunits.

The protein localises to the cytoplasm. The enzyme catalyses Exonucleolytic cleavage in either 5'- to 3'- or 3'- to 5'-direction to yield nucleoside 5'-phosphates.. Functionally, bidirectionally degrades single-stranded DNA into large acid-insoluble oligonucleotides, which are then degraded further into small acid-soluble oligonucleotides. This Pseudomonas aeruginosa (strain UCBPP-PA14) protein is Exodeoxyribonuclease 7 large subunit.